The following is a 521-amino-acid chain: Acetylcholine receptor subunit delta (521 aa).

Residues 1–21 form the signal peptide; that stretch reads MAWIWISLLLPILIYFPGCFS. Residues 22–247 are Extracellular-facing; the sequence is ESEEERLLNH…ITFYLIIERK (226 aa). Residues Asn53 and Asn164 are each glycosylated (N-linked (GlcNAc...) asparagine). Cys151 and Cys165 are joined by a disulfide. The next 3 membrane-spanning stretches (helical) occupy residues 248–272, 280–297, and 314–335; these read PLFY…VFYL, MTLA…LLLI, and YLMF…VLNL. Residues 336–475 lie on the Cytoplasmic side of the membrane; the sequence is HFRTPSTHAI…WYRIARTVDR (140 aa). Position 394 is a phosphotyrosine; by Tyr-kinases (Tyr394). Residues 476–494 traverse the membrane as a helical segment; sequence LCLFLVTPVMIIGTLWIFL.

It belongs to the ligand-gated ion channel (TC 1.A.9) family. Acetylcholine receptor (TC 1.A.9.1) subfamily. Pentamer of two alpha chains, and one each of the beta, delta, and gamma (in immature muscle) or epsilon (in mature muscle) chains.

Its subcellular location is the postsynaptic cell membrane. The protein localises to the cell membrane. The enzyme catalyses K(+)(in) = K(+)(out). The catalysed reaction is Na(+)(in) = Na(+)(out). Functionally, after binding acetylcholine, the AChR responds by an extensive change in conformation that affects all subunits and leads to opening of an ion-conducting channel across the plasma membrane. This is Acetylcholine receptor subunit delta (chrnd) from Xenopus laevis (African clawed frog).